We begin with the raw amino-acid sequence, 145 residues long: D-aminoacyl-tRNA deacylase (145 aa).

A Gly-cisPro motif, important for rejection of L-amino acids motif is present at residues 137-138; it reads GP.

This sequence belongs to the DTD family. As to quaternary structure, homodimer.

It is found in the cytoplasm. It carries out the reaction glycyl-tRNA(Ala) + H2O = tRNA(Ala) + glycine + H(+). The catalysed reaction is a D-aminoacyl-tRNA + H2O = a tRNA + a D-alpha-amino acid + H(+). An aminoacyl-tRNA editing enzyme that deacylates mischarged D-aminoacyl-tRNAs. Also deacylates mischarged glycyl-tRNA(Ala), protecting cells against glycine mischarging by AlaRS. Acts via tRNA-based rather than protein-based catalysis; rejects L-amino acids rather than detecting D-amino acids in the active site. By recycling D-aminoacyl-tRNA to D-amino acids and free tRNA molecules, this enzyme counteracts the toxicity associated with the formation of D-aminoacyl-tRNA entities in vivo and helps enforce protein L-homochirality. This Cereibacter sphaeroides (strain KD131 / KCTC 12085) (Rhodobacter sphaeroides) protein is D-aminoacyl-tRNA deacylase.